The following is a 267-amino-acid chain: Hydroxyethylthiazole kinase (267 aa).

Residue Met-46 coordinates substrate. ATP contacts are provided by Arg-122 and Ser-168. Gly-195 lines the substrate pocket.

This sequence belongs to the Thz kinase family. Mg(2+) serves as cofactor.

It catalyses the reaction 5-(2-hydroxyethyl)-4-methylthiazole + ATP = 4-methyl-5-(2-phosphooxyethyl)-thiazole + ADP + H(+). Its pathway is cofactor biosynthesis; thiamine diphosphate biosynthesis; 4-methyl-5-(2-phosphoethyl)-thiazole from 5-(2-hydroxyethyl)-4-methylthiazole: step 1/1. Its function is as follows. Catalyzes the phosphorylation of the hydroxyl group of 4-methyl-5-beta-hydroxyethylthiazole (THZ). This chain is Hydroxyethylthiazole kinase, found in Nitratidesulfovibrio vulgaris (strain DP4) (Desulfovibrio vulgaris).